The sequence spans 153 residues: Cytochrome c-type biogenesis protein CcmE (153 aa).

Residues methionine 1–arginine 6 lie on the Cytoplasmic side of the membrane. The helical; Signal-anchor for type II membrane protein transmembrane segment at leucine 7–alanine 27 threads the bilayer. Topologically, residues leucine 28–proline 153 are periplasmic. Residues histidine 121 and tyrosine 125 each coordinate heme. Residues leucine 130–histidine 141 are compositionally biased toward polar residues. The segment at leucine 130–proline 153 is disordered.

This sequence belongs to the CcmE/CycJ family.

The protein localises to the cell inner membrane. Functionally, heme chaperone required for the biogenesis of c-type cytochromes. Transiently binds heme delivered by CcmC and transfers the heme to apo-cytochromes in a process facilitated by CcmF and CcmH. The sequence is that of Cytochrome c-type biogenesis protein CcmE from Xylella fastidiosa (strain 9a5c).